We begin with the raw amino-acid sequence, 92 residues long: Putative transition state regulator Abh (92 aa).

Positions 5–50 constitute a SpoVT-AbrB domain; it reads GVVRKVDELGRIVMPIELRRALDIAIKDSIEFFVDGDKIILKKYKP.

The protein to B.subtilis AbrB and SpoVT.

This Bacillus subtilis (strain 168) protein is Putative transition state regulator Abh (abh).